The sequence spans 763 residues: Phospholipid phosphatase-related protein type 4 (763 aa).

Residues 33 to 54 are disordered; that stretch reads VHTSPGGGRRPGQAAGMSAKER. At S36 the chain carries Phosphoserine. 3 helical membrane-spanning segments follow: residues 67–87, 119–139, and 178–198; these read LPCF…SLYF, AIPF…TIMV, and FVGV…IIQL. Residues N214 and N219 are each glycosylated (N-linked (GlcNAc...) asparagine). A helical membrane pass occupies residues 247 to 267; that stretch reads SFPSQHATLAAFAAVYVSMYF. N268 is a glycosylation site (N-linked (GlcNAc...) asparagine). Transmembrane regions (helical) follow at residues 276-296 and 308-328; these read KLLK…CGLT and VYCG…YAVG. A Phosphoserine modification is found at S346. N362 carries N-linked (GlcNAc...) asparagine glycosylation. S385 is modified (phosphoserine). N432 is a glycosylation site (N-linked (GlcNAc...) asparagine). S438 is modified (phosphoserine). The N-linked (GlcNAc...) asparagine glycan is linked to N455. The tract at residues 458-529 is disordered; it reads RKLSLQVIEP…PRVSIQSRPG (72 aa). 2 positions are modified to phosphoserine: S461 and S472. 3 N-linked (GlcNAc...) asparagine glycosylation sites follow: N513, N543, and N568. Phosphoserine is present on S606. Over residues 669-694 the composition is skewed to basic and acidic residues; the sequence is DSESCESLKDSFGSGDRKRSNIDSNE. 2 disordered regions span residues 669–698 and 739–763; these read DSES…HHHH and ERSN…AYKD. Polar residues predominate over residues 740-749; sequence RSNSPENTRN.

The protein belongs to the PA-phosphatase related phosphoesterase family. O-glycosylated. Probably at Ser-346. As to expression, expressed by glutamatergic neurons (at protein level).

Its subcellular location is the postsynaptic density membrane. Postsynaptic density membrane protein that indirectly regulates glutamatergic synaptic transmission through lysophosphatidic acid (LPA)-mediated signaling pathways. Binds lysophosphatidic acid (LPA) and mediates its internalization into cells. Could act as receptor or a transporter of this lipid at the post-synaptic membrane. Modulates lysophosphatidic acid (LPA) activity in neuron axonal outgrowth during development by attenuating phospholipid-induced axon collapse. The protein is Phospholipid phosphatase-related protein type 4 of Homo sapiens (Human).